The primary structure comprises 228 residues: Chaperone protein FanE (228 aa).

The signal sequence occupies residues 1–19; it reads MNKFISIIALCVFSSYANA. Cysteine 157 and cysteine 198 are joined by a disulfide.

This sequence belongs to the periplasmic pilus chaperone family.

It localises to the periplasm. Its function is as follows. Mediates assembly of pili by forming soluble multimeric complexes with pili subunits as an intermediate step in the assembly process. This protein is involved in K99 pili assembly. This chain is Chaperone protein FanE (fanE), found in Escherichia coli.